Consider the following 150-residue polypeptide: MKYQQLENLESGWKWKYLVKKHREGELITRYIEASAAQEAVDELLSLENEPVLVNGWIDKHMNPELVNRMKQTIRARRKRHFNAEHQHTRKKSIDLEFIVWHRLAGLAQRRGKTLSETIVQLIEDAENKEKYANKMSSLKQDLQALLGKE.

This sequence belongs to the MatP family. In terms of assembly, homodimer.

Its subcellular location is the cytoplasm. Its function is as follows. Required for spatial organization of the terminus region of the chromosome (Ter macrodomain) during the cell cycle. Prevents early segregation of duplicated Ter macrodomains during cell division. Binds specifically to matS, which is a 13 bp signature motif repeated within the Ter macrodomain. This Escherichia coli O6:K15:H31 (strain 536 / UPEC) protein is Macrodomain Ter protein.